We begin with the raw amino-acid sequence, 297 residues long: Formamidopyrimidine-DNA glycosylase (297 aa).

The Schiff-base intermediate with DNA role is filled by Pro-2. Catalysis depends on Glu-3, which acts as the Proton donor. The active-site Proton donor; for beta-elimination activity is Lys-58. The DNA site is built by His-104, Arg-127, and Lys-170. The FPG-type zinc-finger motif lies at 261 to 297 (SVYDREGKPCRKEGCSGTIQRFVQGGRSTFYCPICQR). Arg-287 (proton donor; for delta-elimination activity) is an active-site residue.

It belongs to the FPG family. In terms of assembly, monomer. The cofactor is Zn(2+).

The enzyme catalyses Hydrolysis of DNA containing ring-opened 7-methylguanine residues, releasing 2,6-diamino-4-hydroxy-5-(N-methyl)formamidopyrimidine.. The catalysed reaction is 2'-deoxyribonucleotide-(2'-deoxyribose 5'-phosphate)-2'-deoxyribonucleotide-DNA = a 3'-end 2'-deoxyribonucleotide-(2,3-dehydro-2,3-deoxyribose 5'-phosphate)-DNA + a 5'-end 5'-phospho-2'-deoxyribonucleoside-DNA + H(+). In terms of biological role, involved in base excision repair of DNA damaged by oxidation or by mutagenic agents. Acts as a DNA glycosylase that recognizes and removes damaged bases. Has a preference for oxidized purines, such as 7,8-dihydro-8-oxoguanine (8-oxoG). Has AP (apurinic/apyrimidinic) lyase activity and introduces nicks in the DNA strand. Cleaves the DNA backbone by beta-delta elimination to generate a single-strand break at the site of the removed base with both 3'- and 5'-phosphates. The chain is Formamidopyrimidine-DNA glycosylase from Chelativorans sp. (strain BNC1).